The following is a 203-amino-acid chain: MKVVAFERSVQGTGASRRLRNSGKTPGIIYGGAAEPKMIELDHNALWHALKKEAFHSSILDLEVAGKSEKALLRAFQMHPFKPLVLHVDFQRVSATEKIHVKVPLHFMNQETAPGVKLGHGIVSHILNDLEVSCLPADLPEFIEVDLAAAELNQTIHLSDLKLPKGVTAITHGDENPAIASITLPAGAQSSEAAEGGEETPAA.

It belongs to the bacterial ribosomal protein bL25 family. CTC subfamily. Part of the 50S ribosomal subunit; part of the 5S rRNA/L5/L18/L25 subcomplex. Contacts the 5S rRNA. Binds to the 5S rRNA independently of L5 and L18.

In terms of biological role, this is one of the proteins that binds to the 5S RNA in the ribosome where it forms part of the central protuberance. This Cupriavidus metallidurans (strain ATCC 43123 / DSM 2839 / NBRC 102507 / CH34) (Ralstonia metallidurans) protein is Large ribosomal subunit protein bL25.